We begin with the raw amino-acid sequence, 807 residues long: Glycerol-3-phosphate acyltransferase (807 aa).

The HXXXXD motif signature appears at Cys-305 to Met-310.

This sequence belongs to the GPAT/DAPAT family.

The protein resides in the cell inner membrane. It carries out the reaction sn-glycerol 3-phosphate + an acyl-CoA = a 1-acyl-sn-glycero-3-phosphate + CoA. It participates in phospholipid metabolism; CDP-diacylglycerol biosynthesis; CDP-diacylglycerol from sn-glycerol 3-phosphate: step 1/3. This chain is Glycerol-3-phosphate acyltransferase, found in Vibrio atlanticus (strain LGP32) (Vibrio splendidus (strain Mel32)).